The following is a 442-amino-acid chain: Trigger factor (442 aa).

Residues 163–248 enclose the PPIase FKBP-type domain; sequence YDRVTINYCI…IIKIEKKQEL (86 aa).

The protein belongs to the FKBP-type PPIase family. Tig subfamily.

The protein resides in the cytoplasm. The catalysed reaction is [protein]-peptidylproline (omega=180) = [protein]-peptidylproline (omega=0). In terms of biological role, involved in protein export. Acts as a chaperone by maintaining the newly synthesized protein in an open conformation. Functions as a peptidyl-prolyl cis-trans isomerase. The protein is Trigger factor of Buchnera aphidicola subsp. Acyrthosiphon pisum (strain 5A).